A 517-amino-acid polypeptide reads, in one-letter code: Glutamate--cysteine ligase (517 aa).

It belongs to the glutamate--cysteine ligase type 1 family. Type 1 subfamily.

It catalyses the reaction L-cysteine + L-glutamate + ATP = gamma-L-glutamyl-L-cysteine + ADP + phosphate + H(+). It functions in the pathway sulfur metabolism; glutathione biosynthesis; glutathione from L-cysteine and L-glutamate: step 1/2. This chain is Glutamate--cysteine ligase, found in Pectobacterium atrosepticum (strain SCRI 1043 / ATCC BAA-672) (Erwinia carotovora subsp. atroseptica).